A 118-amino-acid chain; its full sequence is Small ribosomal subunit protein uS13 (118 aa).

The disordered stretch occupies residues 94-118; the sequence is GLPVRGQRTKTNARTRKGPCKPIKK.

The protein belongs to the universal ribosomal protein uS13 family. As to quaternary structure, part of the 30S ribosomal subunit. Forms a loose heterodimer with protein S19. Forms two bridges to the 50S subunit in the 70S ribosome.

Its function is as follows. Located at the top of the head of the 30S subunit, it contacts several helices of the 16S rRNA. In the 70S ribosome it contacts the 23S rRNA (bridge B1a) and protein L5 of the 50S subunit (bridge B1b), connecting the 2 subunits; these bridges are implicated in subunit movement. Contacts the tRNAs in the A and P-sites. The polypeptide is Small ribosomal subunit protein uS13 (Salmonella typhi).